The following is a 283-amino-acid chain: Non-selective voltage-gated ion channel VDAC3 (283 aa).

C2 is modified (N-acetylcysteine). Residue T4 is modified to Phosphothreonine. K12, K15, and K20 each carry N6-acetyllysine. The next 2 membrane-spanning stretches (beta stranded) occupy residues 26 to 35 (MVKIDLKTKS) and 39 to 47 (VEFSTSGHA). Glycyl lysine isopeptide (Lys-Gly) (interchain with G-Cter in ubiquitin) cross-links involve residues K53 and K61. 3 consecutive transmembrane segments (beta stranded) span residues 54-64 (ASGNLETKYKV), 69-76 (LTFTQKWN), and 80-89 (TLGTEISWEN). The residue at position 90 (K90) is an N6-acetyllysine. A beta stranded transmembrane segment spans residues 95-104 (LKLTLDTIFV). Residues K109 and K110 each participate in a glycyl lysine isopeptide (Lys-Gly) (interchain with G-Cter in ubiquitin) cross-link. The next 10 membrane-spanning stretches (beta stranded) occupy residues 111-120 (SGKLKASYKR), 123-130 (FSVGSNVD), 137-145 (TIYGWAVLA), 150-158 (LAGYQMSFD), 163-175 (KLSQ…GYKA), 178-185 (FQLHTHVN), 189-198 (EFGGSIYQKV), 202-211 (IETSINLAWT), 218-227 (RFGIAAKYML), and 231-238 (TSLSAKVN). A Glycyl lysine isopeptide (Lys-Gly) (interchain with G-Cter in ubiquitin) cross-link involves residue K163. Position 241 is a phosphoserine (S241). NAD(+) contacts are provided by residues 242 to 244 (LIG) and 260 to 264 (SALID). A run of 2 beta stranded transmembrane segments spans residues 242 to 251 (LIGLGYTQTL) and 254 to 263 (GVKLTLSALI). The residue at position 266 (K266) is an N6-acetyllysine; alternate. Residue K266 forms a Glycyl lysine isopeptide (Lys-Gly) (interchain with G-Cter in ubiquitin); alternate linkage. A beta stranded transmembrane segment spans residues 273-282 (HKVGLGFELE). A Glycyl lysine isopeptide (Lys-Gly) (interchain with G-Cter in ubiquitin) cross-link involves residue K274.

It belongs to the eukaryotic mitochondrial porin family. As to quaternary structure, interacts with ARMC12 in a TBC1D21-dependent manner. Interacts with MISFA. Ubiquitinated by PRKN during mitophagy, leading to its degradation and enhancement of mitophagy. Deubiquitinated by USP30. Expressed in erythrocytes (at protein level). Widely expressed. Highest in testis.

It is found in the mitochondrion outer membrane. The protein resides in the membrane. The catalysed reaction is chloride(in) = chloride(out). It catalyses the reaction K(+)(in) = K(+)(out). Functionally, non-selective voltage-gated ion channel that mediates the transport of anions and cations through the mitochondrion outer membrane and plasma membrane. Forms a high-conducting channel with a stable open state and a voltage-induced closure with a mild preference for anions over cations. Involved in male fertility and sperm mitochondrial sheath formation. This Homo sapiens (Human) protein is Non-selective voltage-gated ion channel VDAC3.